Reading from the N-terminus, the 292-residue chain is UPF0761 membrane protein Ping_3482 (292 aa).

Transmembrane regions (helical) follow at residues 43–63, 100–120, 139–159, 179–199, 209–229, and 243–263; these read LLSIVPLLAVIFYMLAAFPVF, MSMMGIGSLIAIALLLISTID, FTIYWTILSLGPVIIGASLAL, LLSLMPFILTWLTFAGVYTLV, ALIGGLIAAILFFFGTDLFRL, and ALAVIPILFVWIYYSWLIVLI.

This sequence belongs to the UPF0761 family.

The protein resides in the cell inner membrane. In Psychromonas ingrahamii (strain DSM 17664 / CCUG 51855 / 37), this protein is UPF0761 membrane protein Ping_3482.